Here is a 424-residue protein sequence, read N- to C-terminus: Cytoplasmic tRNA 2-thiolation protein 2 (424 aa).

Residues 357-385 form a disordered region; that stretch reads PAAPETEEEEELSKKAHMEKSQEKTGDAD. Over residues 368–385 the composition is skewed to basic and acidic residues; it reads LSKKAHMEKSQEKTGDAD.

The protein belongs to the CTU2/NCS2 family.

It localises to the cytoplasm. It functions in the pathway tRNA modification; 5-methoxycarbonylmethyl-2-thiouridine-tRNA biosynthesis. In terms of biological role, plays a central role in 2-thiolation of mcm(5)S(2)U at tRNA wobble positions of tRNA(Lys), tRNA(Glu) and tRNA(Gln). May act by forming a heterodimer with NCS6 that ligates sulfur from thiocarboxylated URM1 onto the uridine of tRNAs at wobble position. Prior mcm(5) tRNA modification by the elongator complex is required for 2-thiolation. May also be involved in protein urmylation. This chain is Cytoplasmic tRNA 2-thiolation protein 2, found in Yarrowia lipolytica (strain CLIB 122 / E 150) (Yeast).